The primary structure comprises 164 residues: Phosphopantetheine adenylyltransferase (164 aa).

Thr-9 contacts substrate. ATP is bound by residues 9-10 and His-17; that span reads TF. 3 residues coordinate substrate: Lys-41, Thr-76, and Arg-90. ATP-binding positions include 91 to 93, Glu-101, and 126 to 132; these read GLR and YQFVSSS.

This sequence belongs to the bacterial CoaD family. As to quaternary structure, homohexamer. Mg(2+) is required as a cofactor.

It is found in the cytoplasm. The enzyme catalyses (R)-4'-phosphopantetheine + ATP + H(+) = 3'-dephospho-CoA + diphosphate. Its pathway is cofactor biosynthesis; coenzyme A biosynthesis; CoA from (R)-pantothenate: step 4/5. Its function is as follows. Reversibly transfers an adenylyl group from ATP to 4'-phosphopantetheine, yielding dephospho-CoA (dPCoA) and pyrophosphate. This is Phosphopantetheine adenylyltransferase from Coprothermobacter proteolyticus (strain ATCC 35245 / DSM 5265 / OCM 4 / BT).